The following is a 21-amino-acid chain: Brevinin-1OKb (21 aa).

Lysine amide is present on lysine 21.

Expressed by the skin glands.

It is found in the secreted. Functionally, antimicrobial peptide. The sequence is that of Brevinin-1OKb from Nidirana okinavana (Kampira Falls frog).